Reading from the N-terminus, the 374-residue chain is MGELVDNLPEEVLALIFRDLPLRDLAVATRVCRAWAAAAANSTVWSDKSISCDCELEDLLPPYLSSCLDHIHNLRLEYEPSKKPSRGTATELLTALASRAPRLRGLRLECRGEKPLFDAGQDILGAVHAVCGAAHQLRHLDLRHLPYTLDDTLVLKAAAGCPELRSLFLDNHALVNSVQPTSVLKLLEACPHLRALGLHLASMSRAALELLAAPHRSPFALLALRCACPEDARASPLPDEAWATLSCRHPGLEVELELEPVLPDEAVTRILQPAVPVAVLRLNLSGDTVGPVRFATRHYAETLRALEVRASASPELHTALEELAARCAGLREIHCFCVVRPSVLDAFRAHCPRLRSYTLKLKREPHPWRPTLVR.

Residues 2–48 enclose the F-box domain; that stretch reads GELVDNLPEEVLALIFRDLPLRDLAVATRVCRAWAAAAANSTVWSDK.

Directly interacts with SKP1 and CUL1. As to expression, widely expressed during embryogenesis and in adult tissues.

Functionally, substrate-recognition component of the SCF (SKP1-CUL1-F-box protein)-type E3 ubiquitin ligase complex. The sequence is that of F-box/LRR-repeat protein 8 (Fbxl8) from Mus musculus (Mouse).